The chain runs to 191 residues: Peptidyl-tRNA hydrolase (191 aa).

Tyrosine 14 contacts tRNA. The Proton acceptor role is filled by histidine 19. TRNA-binding residues include tyrosine 64, asparagine 66, and asparagine 112.

The protein belongs to the PTH family. Monomer.

It is found in the cytoplasm. It carries out the reaction an N-acyl-L-alpha-aminoacyl-tRNA + H2O = an N-acyl-L-amino acid + a tRNA + H(+). Its function is as follows. Hydrolyzes ribosome-free peptidyl-tRNAs (with 1 or more amino acids incorporated), which drop off the ribosome during protein synthesis, or as a result of ribosome stalling. In terms of biological role, catalyzes the release of premature peptidyl moieties from peptidyl-tRNA molecules trapped in stalled 50S ribosomal subunits, and thus maintains levels of free tRNAs and 50S ribosomes. This is Peptidyl-tRNA hydrolase from Clostridium botulinum (strain Eklund 17B / Type B).